Reading from the N-terminus, the 224-residue chain is Deoxyribose-phosphate aldolase (224 aa).

The Proton donor/acceptor role is filled by Asp-92. Lys-155 acts as the Schiff-base intermediate with acetaldehyde in catalysis. Lys-184 acts as the Proton donor/acceptor in catalysis.

This sequence belongs to the DeoC/FbaB aldolase family. DeoC type 1 subfamily.

The protein resides in the cytoplasm. The catalysed reaction is 2-deoxy-D-ribose 5-phosphate = D-glyceraldehyde 3-phosphate + acetaldehyde. It participates in carbohydrate degradation; 2-deoxy-D-ribose 1-phosphate degradation; D-glyceraldehyde 3-phosphate and acetaldehyde from 2-deoxy-alpha-D-ribose 1-phosphate: step 2/2. Functionally, catalyzes a reversible aldol reaction between acetaldehyde and D-glyceraldehyde 3-phosphate to generate 2-deoxy-D-ribose 5-phosphate. This is Deoxyribose-phosphate aldolase from Clostridium perfringens (strain ATCC 13124 / DSM 756 / JCM 1290 / NCIMB 6125 / NCTC 8237 / Type A).